Reading from the N-terminus, the 681-residue chain is MIYQEENQHLRIGLASPEEIRGWAERTLPNGEVVGRITEPYTLHYKTHKPEKDGLFCERIFGPIKSGICACGKYRSIENQREYSKICEQCGVEFTESRVRRYRMGYIELACPVTHVWYLKRLPSYIANLLAKPLKELESLVYCDLFLARPIAKKPTLLKLRGLFKYEDQSWKEIFPRFFSPRGFEAFQDREVATGGNAIEKGLASLNLQIVMDRAYMEWRNLTEQKSTGNEWEDRKIQRRKDLLVRRMELAKNFLQTNMKPEWMVLSLLPVLPPELRPMIELGEGELITSDLNELYRRVIYRNNTLLDFLARGRSTPGGLVVCQKRLVQEAVDALIDNGIRGQPMRDSHNRAYKSFSDLIEGKEGRFRENLLGKRVDYSGRSVIVAGPYLPLHECGLPKEMAVELFQAFVIRGLIGRYLAPNLRAAKSMIQDKEPIIWKILKEVIQGHPVLLNRAPTLHRLGIQAFEPILVEGRAIRLHPLVCAGFNADFDGDQMAVHIPLSLEAQVEARLLMFSHTNLLSPVTGNPVSVPSQDMLLGIYVSTIRSNRGIYQNQYHPYDYRNKNFSYKMFYFHSYDDILKAEKQKQINLHSPLWLRWQVDLHIVTSIDREVPIEIQYESLGTSSQIYENYQFRKNRKEKILSMYICTTAGRILFNQQIEEAIQGFFEVSQHRSRPLPAIIA.

Positions 69, 71, 87, and 90 each coordinate Zn(2+). Residues aspartate 489, aspartate 491, and aspartate 493 each contribute to the Mg(2+) site.

Belongs to the RNA polymerase beta' chain family. RpoC1 subfamily. In terms of assembly, in plastids the minimal PEP RNA polymerase catalytic core is composed of four subunits: alpha, beta, beta', and beta''. When a (nuclear-encoded) sigma factor is associated with the core the holoenzyme is formed, which can initiate transcription. It depends on Mg(2+) as a cofactor. Zn(2+) is required as a cofactor.

It is found in the plastid. The protein resides in the chloroplast. It catalyses the reaction RNA(n) + a ribonucleoside 5'-triphosphate = RNA(n+1) + diphosphate. Functionally, DNA-dependent RNA polymerase catalyzes the transcription of DNA into RNA using the four ribonucleoside triphosphates as substrates. This Anthoceros angustus (Hornwort) protein is DNA-directed RNA polymerase subunit beta'.